The chain runs to 254 residues: MLLVIDVGNSNIVLGIYDEERLVRDWRVSTDKSKTIDEYGILFHDLFRLADIVFTDVKDIIISSVVPTLTGVLEKLSRQYFKISPYVVGPGIKTGMPIHYDNPKEVGADRIVNAIAGFEKYRTALIIVDFGTATTFDYVNKKGEYCGGAIAPGLAISMEALFMKASKLPRVDIARPPSIIAKNTVNSMQAGIFFGYVGLVDGIVQRMKGEGKENPKVIATGGLASLIAPESVTIEEVDEFLTLEGLRIIHQRNK.

ATP is bound at residue 6 to 13 (DVGNSNIV). Residues tyrosine 100 and 107 to 110 (GADR) contribute to the substrate site. Catalysis depends on aspartate 109, which acts as the Proton acceptor. Residue aspartate 129 coordinates K(+). Threonine 132 is an ATP binding site. Residue threonine 184 participates in substrate binding.

The protein belongs to the type III pantothenate kinase family. As to quaternary structure, homodimer. It depends on NH4(+) as a cofactor. K(+) serves as cofactor.

The protein resides in the cytoplasm. The enzyme catalyses (R)-pantothenate + ATP = (R)-4'-phosphopantothenate + ADP + H(+). It functions in the pathway cofactor biosynthesis; coenzyme A biosynthesis; CoA from (R)-pantothenate: step 1/5. Functionally, catalyzes the phosphorylation of pantothenate (Pan), the first step in CoA biosynthesis. The sequence is that of Type III pantothenate kinase from Geobacter sp. (strain M21).